The sequence spans 433 residues: Methylenetetrahydrofolate--tRNA-(uracil-5-)-methyltransferase TrmFO (433 aa).

G7–G12 is an FAD binding site.

It belongs to the MnmG family. TrmFO subfamily. It depends on FAD as a cofactor.

It localises to the cytoplasm. It carries out the reaction uridine(54) in tRNA + (6R)-5,10-methylene-5,6,7,8-tetrahydrofolate + NADH + H(+) = 5-methyluridine(54) in tRNA + (6S)-5,6,7,8-tetrahydrofolate + NAD(+). It catalyses the reaction uridine(54) in tRNA + (6R)-5,10-methylene-5,6,7,8-tetrahydrofolate + NADPH + H(+) = 5-methyluridine(54) in tRNA + (6S)-5,6,7,8-tetrahydrofolate + NADP(+). Functionally, catalyzes the folate-dependent formation of 5-methyl-uridine at position 54 (M-5-U54) in all tRNAs. This is Methylenetetrahydrofolate--tRNA-(uracil-5-)-methyltransferase TrmFO from Natranaerobius thermophilus (strain ATCC BAA-1301 / DSM 18059 / JW/NM-WN-LF).